The primary structure comprises 247 residues: Probable 2-phosphosulfolactate phosphatase (247 aa).

The protein belongs to the ComB family. Requires Mg(2+) as cofactor.

It catalyses the reaction (2R)-O-phospho-3-sulfolactate + H2O = (2R)-3-sulfolactate + phosphate. The sequence is that of Probable 2-phosphosulfolactate phosphatase from Clostridium perfringens (strain 13 / Type A).